The following is a 287-amino-acid chain: Mitochondrial glycine transporter A (287 aa).

Solcar repeat units follow at residues 7-97 (HPAV…LKQR), 104-188 (PGPL…TKHL), and 198-282 (YAPV…LMAQ). 6 helical membrane-spanning segments follow: residues 13–38 (FMCG…TRLQ), 72–98 (GVSP…KQRY), 110–135 (VLLG…TRFE), 163–186 (GLMA…SQTK), 202–228 (ANFS…KTHI), and 257–275 (GAVP…AWTV).

Belongs to the mitochondrial carrier (TC 2.A.29) family. SLC25A38 subfamily. In terms of tissue distribution, at 24 hours post-fertilization, expressed predominantly in posterior blood island, posterior cardinal vein and circulating blood, as well as in somites, brain and retina. At 34 hours post-fertilization, becomes restricted to posterior blood island and circulating blood.

Its subcellular location is the mitochondrion inner membrane. The catalysed reaction is glycine(in) = glycine(out). Mitochondrial glycine transporter that imports glycine into the mitochondrial matrix. Plays an important role in providing glycine for the first enzymatic step in heme biosynthesis, the condensation of glycine with succinyl-CoA to produce 5-aminolevulinate (ALA) in the mitochondrial matrix. Required during erythropoiesis. Its function is as follows. May play a role as pro-apoptotic protein that induces caspase-dependent apoptosis. This is Mitochondrial glycine transporter A (slc25a38a) from Danio rerio (Zebrafish).